We begin with the raw amino-acid sequence, 158 residues long: Endoribonuclease YbeY (158 aa).

Residues His119, His123, and His129 each coordinate Zn(2+).

The protein belongs to the endoribonuclease YbeY family. Zn(2+) serves as cofactor.

The protein resides in the cytoplasm. Its function is as follows. Single strand-specific metallo-endoribonuclease involved in late-stage 70S ribosome quality control and in maturation of the 3' terminus of the 16S rRNA. In Shewanella woodyi (strain ATCC 51908 / MS32), this protein is Endoribonuclease YbeY.